A 278-amino-acid chain; its full sequence is Digeranylgeranylglyceryl phosphate synthase (278 aa).

Helical transmembrane passes span 15–35 (VIGSAISVFMGYVVASEWKIV), 36–56 (PIKLILAMIVVSVIAAGGYII), 89–109 (IVLFLVGIVLSVLLNIYAFII), 133–153 (LIVALTSALSAFYGGLAFFEG), 159–179 (TLIPTLYIFFFTLTREFVKGI), 203–223 (WFISKIILVILIVTSFIPYFF), 225–245 (FNIIYLIGILFLDIILILVVL), and 258–278 (AYMKVYALGTLILFALGTLPI).

It belongs to the UbiA prenyltransferase family. DGGGP synthase subfamily. Mg(2+) is required as a cofactor.

The protein localises to the cell membrane. It carries out the reaction sn-3-O-(geranylgeranyl)glycerol 1-phosphate + (2E,6E,10E)-geranylgeranyl diphosphate = 2,3-bis-O-(geranylgeranyl)-sn-glycerol 1-phosphate + diphosphate. It functions in the pathway membrane lipid metabolism; glycerophospholipid metabolism. Its function is as follows. Prenyltransferase that catalyzes the transfer of the geranylgeranyl moiety of geranylgeranyl diphosphate (GGPP) to the C2 hydroxyl of (S)-3-O-geranylgeranylglyceryl phosphate (GGGP). This reaction is the second ether-bond-formation step in the biosynthesis of archaeal membrane lipids. The polypeptide is Digeranylgeranylglyceryl phosphate synthase (Sulfurisphaera tokodaii (strain DSM 16993 / JCM 10545 / NBRC 100140 / 7) (Sulfolobus tokodaii)).